A 204-amino-acid polypeptide reads, in one-letter code: Casparian strip membrane protein 2 (204 aa).

Residues 1–42 (MKNESTTIDVPAESSSAMKGKAPLIGVARDHTTSGSGGYNRG) lie on the Cytoplasmic side of the membrane. A helical transmembrane segment spans residues 43–63 (LSIFDFLLRLAAIVAALAAAA). At 64–92 (TMGTSDETLPFFTQFLQFEASYDDLPTFQ) the chain is on the extracellular side. A helical membrane pass occupies residues 93 to 113 (FFVIAMALVGGYLVLSLPISV). The Cytoplasmic segment spans residues 114 to 125 (VTILRPLATAPR). A helical transmembrane segment spans residues 126-146 (LLLLVLDTAVLALNTAAASSA). Residues 147-178 (AAISYLAHSGNQNTNWLPICQQFGDFCQKSSG) are Extracellular-facing. Residues 179–199 (AVVSAFISVVFFTILVVISGV) traverse the membrane as a helical segment. Over 200-204 (ALKRH) the chain is Cytoplasmic.

The protein belongs to the Casparian strip membrane proteins (CASP) family. Homodimer and heterodimers.

The protein resides in the cell membrane. In terms of biological role, regulates membrane-cell wall junctions and localized cell wall deposition. Required for establishment of the Casparian strip membrane domain (CSD) and the subsequent formation of Casparian strips, a cell wall modification of the root endodermis that determines an apoplastic barrier between the intraorganismal apoplasm and the extraorganismal apoplasm and prevents lateral diffusion. This Arabidopsis lyrata subsp. lyrata (Lyre-leaved rock-cress) protein is Casparian strip membrane protein 2.